A 341-amino-acid polypeptide reads, in one-letter code: NADH-quinone oxidoreductase subunit H (341 aa).

9 consecutive transmembrane segments (helical) span residues 4–24 (LVNILFILVPLLLSVAYLTYF), 38–58 (PSVVGPFGLLQPFADAIKLLI), 70–90 (ILFIMAPMLTFILALIAWAVI), 115–135 (VGVLYVLAISSLGVYGVIIAG), 161–181 (IGLIVAAVVITTGTLNLGEMV), 187–207 (MPFWVDLLLMPIGIIFFISLL), 239–259 (LFFLGEYANMILASAMMTIFF), 275–295 (IPGLIWFVLKIVILLFIFIWI), and 314–334 (VFLPISVLWVILISGVLLFTG).

This sequence belongs to the complex I subunit 1 family. In terms of assembly, NDH-1 is composed of 14 different subunits. Subunits NuoA, H, J, K, L, M, N constitute the membrane sector of the complex.

It localises to the cell membrane. The enzyme catalyses a quinone + NADH + 5 H(+)(in) = a quinol + NAD(+) + 4 H(+)(out). Functionally, NDH-1 shuttles electrons from NADH, via FMN and iron-sulfur (Fe-S) centers, to quinones in the respiratory chain. The immediate electron acceptor for the enzyme in this species is believed to be ubiquinone. Couples the redox reaction to proton translocation (for every two electrons transferred, four hydrogen ions are translocated across the cytoplasmic membrane), and thus conserves the redox energy in a proton gradient. This subunit may bind ubiquinone. The polypeptide is NADH-quinone oxidoreductase subunit H (Wolbachia pipientis wMel).